Consider the following 1188-residue polypeptide: Integrin alpha-11 (1188 aa).

An N-terminal signal peptide occupies residues 1–22 (MDLPRGLVVAWALSLWPGFTDT). Over 23–1141 (FNMDTRKPRV…ISKQEDWQVP (1119 aa)) the chain is Extracellular. 2 FG-GAP repeats span residues 24 to 85 (NMDT…NCTK) and 91 to 151 (VTLS…FSKT). A disulfide bridge connects residues C76 and C83. N82 and N95 each carry an N-linked (GlcNAc...) asparagine glycan. Cystine bridges form between C121–C139 and C129–C159. One can recognise a VWFA domain in the interval 164 to 345 (DIVIVLDGSN…AALKDIVDAL (182 aa)). 5 N-linked (GlcNAc...) asparagine glycosylation sites follow: N291, N331, N358, N449, and N462. FG-GAP repeat units lie at residues 355–406 (TNKN…VIPL), 411–461 (LKEF…TMHN), 462–527 (NRSL…LFVY), 528–586 (NGTL…SILK), and 590–650 (QRIT…FEPS). Residues D488, D490, D492, and D496 each contribute to the Ca(2+) site. N528 carries an N-linked (GlcNAc...) asparagine glycan. Positions 551, 553, 555, 559, 613, 615, 617, and 621 each coordinate Ca(2+). The N-linked (GlcNAc...) asparagine glycan is linked to N642. 3 cysteine pairs are disulfide-bonded: C659–C668, C674–C729, and C781–C787. N-linked (GlcNAc...) asparagine glycosylation is present at N694. The N-linked (GlcNAc...) asparagine glycan is linked to N857. Residues C881 and C893 are joined by a disulfide bond. Residues N894, N973, N1031, N1039, and N1059 are each glycosylated (N-linked (GlcNAc...) asparagine). A helical transmembrane segment spans residues 1142–1164 (IWIIVGSTLGGLLLLALLVLALW). Residues 1165–1188 (KLGFFRSARRRREPGLDPTPKVLE) are Cytoplasmic-facing.

This sequence belongs to the integrin alpha chain family. As to quaternary structure, heterodimer of an alpha and a beta subunit. Alpha-11 associates with beta-1. Interacts with RAB21. According to PubMed:10464311, highest levels of expression in uterus and heart, intermediate levels in skeletal muscle and intermediate to low levels in pancreas, kidney and placenta. According to PubMed:10486209, also found in brain, colon, lung, small intestine, stomach, testis, salivary glands, thyroid glands and prostate. Very low levels in peripheral blood lymphocytes, fetal brain and fetal liver.

It localises to the membrane. In terms of biological role, integrin alpha-11/beta-1 is a receptor for collagen. The chain is Integrin alpha-11 (ITGA11) from Homo sapiens (Human).